Reading from the N-terminus, the 182-residue chain is Large ribosomal subunit protein uL16 (182 aa).

The protein belongs to the universal ribosomal protein uL16 family. In terms of assembly, part of the 50S ribosomal subunit.

The protein is Large ribosomal subunit protein uL16 of Thermococcus kodakarensis (strain ATCC BAA-918 / JCM 12380 / KOD1) (Pyrococcus kodakaraensis (strain KOD1)).